Consider the following 130-residue polypeptide: Ribosome-binding factor A (130 aa).

Residues 111 to 130 (RDLDDVGPEATSSDEDAEQR) are disordered.

Belongs to the RbfA family. In terms of assembly, monomer. Binds 30S ribosomal subunits, but not 50S ribosomal subunits or 70S ribosomes.

It localises to the cytoplasm. Its function is as follows. One of several proteins that assist in the late maturation steps of the functional core of the 30S ribosomal subunit. Associates with free 30S ribosomal subunits (but not with 30S subunits that are part of 70S ribosomes or polysomes). Required for efficient processing of 16S rRNA. May interact with the 5'-terminal helix region of 16S rRNA. In Xanthomonas axonopodis pv. citri (strain 306), this protein is Ribosome-binding factor A.